Reading from the N-terminus, the 98-residue chain is Large ribosomal subunit protein uL23 (98 aa).

This sequence belongs to the universal ribosomal protein uL23 family. As to quaternary structure, part of the 50S ribosomal subunit. Contacts protein L29, and trigger factor when it is bound to the ribosome.

Its function is as follows. One of the early assembly proteins it binds 23S rRNA. One of the proteins that surrounds the polypeptide exit tunnel on the outside of the ribosome. Forms the main docking site for trigger factor binding to the ribosome. This chain is Large ribosomal subunit protein uL23, found in Jannaschia sp. (strain CCS1).